The primary structure comprises 98 residues: C-X-C motif chemokine 10 (98 aa).

Residues 1–21 (MNQTAILICCLIFLTLSGIQG) form the signal peptide. Citrulline; by PAD2 is present on Arg-26. 2 disulfides stabilise this stretch: Cys-30–Cys-57 and Cys-32–Cys-74.

Belongs to the intercrine alpha (chemokine CxC) family. In terms of assembly, monomer, dimer, and tetramer. Interacts with CXCR3 (via N-terminus). Post-translationally, several proteases can mediate post-secretion cleavages. DPP4 cleaves CXCL10 on its N-terminal 2 amino acids leading to an antagonist form of CXCL10. This dominant negative form is capable of binding CXCR3 but does not induce signaling. MMP9 cleaves 9 amino acids instead. As to expression, mainly secreted by monocytes, endothelial cells as well as fibroblasts. Expressed by epithelial cells in thymus. Microglial cells produce CXCL10 in response to viral stimulation.

It localises to the secreted. Pro-inflammatory cytokine that is involved in a wide variety of processes such as chemotaxis, differentiation, and activation of peripheral immune cells, regulation of cell growth, apoptosis and modulation of angiostatic effects. Plays thereby an important role during viral infections by stimulating the activation and migration of immune cells to the infected sites. Mechanistically, binding of CXCL10 to the CXCR3 receptor activates G protein-mediated signaling and results in downstream activation of phospholipase C-dependent pathway, an increase in intracellular calcium production and actin reorganization. In turn, recruitment of activated Th1 lymphocytes occurs at sites of inflammation. Activation of the CXCL10/CXCR3 axis also plays an important role in neurons in response to brain injury for activating microglia, the resident macrophage population of the central nervous system, and directing them to the lesion site. This recruitment is an essential element for neuronal reorganization. The chain is C-X-C motif chemokine 10 (CXCL10) from Homo sapiens (Human).